The primary structure comprises 420 residues: Transcription activator GLK1 (420 aa).

The tract at residues 74 to 152 (GDFSNHMNAS…NRISNNEGKR (79 aa)) is disordered. The span at 106 to 117 (KGEEVVSKRDDV) shows a compositional bias: basic and acidic residues. The span at 135–147 (SSSASSKNNRISN) shows a compositional bias: low complexity. A DNA-binding region (myb-like GARP) is located at residues 150-209 (GKRKVKVDWTPELHRRFVEAVEQLGVDKAVPSRILELMGVHCLTRHNVASHLQKYRSHRK).

Interacts with NAC92. In terms of tissue distribution, expressed in rosette and cauline leaves. Expressed at low levels in cotyledons and shoots.

The protein resides in the nucleus. Transcriptional activator that functions with GLK2 to promote chloroplast development. Acts as an activator of nuclear photosynthetic genes involved in chlorophyll biosynthesis, light harvesting, and electron transport. Acts in a cell-autonomous manner to coordinate and maintain the photosynthetic apparatus within individual cells. May function in photosynthetic capacity optimization by integrating responses to variable environmental and endogenous cues. Prevents premature senescence. The chain is Transcription activator GLK1 (GLK1) from Arabidopsis thaliana (Mouse-ear cress).